A 429-amino-acid chain; its full sequence is Adenylosuccinate synthetase (429 aa).

GTP is bound by residues 12-18 and 40-42; these read GDEGKGK and GHT. Asp-13 acts as the Proton acceptor in catalysis. The Mg(2+) site is built by Asp-13 and Gly-40. IMP contacts are provided by residues 13–16, 38–41, Thr-128, Arg-142, Gln-223, Thr-238, and Arg-302; these read DEGK and NAGH. His-41 (proton donor) is an active-site residue. 298–304 provides a ligand contact to substrate; sequence TVTGRPR. Residues Arg-304, 330–332, and 412–414 each bind GTP; these read LLD and SVG.

It belongs to the adenylosuccinate synthetase family. As to quaternary structure, homodimer. Requires Mg(2+) as cofactor.

Its subcellular location is the cytoplasm. It catalyses the reaction IMP + L-aspartate + GTP = N(6)-(1,2-dicarboxyethyl)-AMP + GDP + phosphate + 2 H(+). Its pathway is purine metabolism; AMP biosynthesis via de novo pathway; AMP from IMP: step 1/2. Plays an important role in the de novo pathway of purine nucleotide biosynthesis. Catalyzes the first committed step in the biosynthesis of AMP from IMP. The chain is Adenylosuccinate synthetase from Lactobacillus acidophilus (strain ATCC 700396 / NCK56 / N2 / NCFM).